The chain runs to 478 residues: SPbeta prophage-derived uncharacterized protein YonD (478 aa).

Residues 326–419 (IQSQLNQKDE…KFSTEEVQNL (94 aa)) are a coiled coil.

The chain is SPbeta prophage-derived uncharacterized protein YonD (yonD) from Bacillus subtilis (strain 168).